Reading from the N-terminus, the 257-residue chain is UPF0246 protein YaaA (257 aa).

The protein belongs to the UPF0246 family.

This Salmonella choleraesuis (strain SC-B67) protein is UPF0246 protein YaaA.